We begin with the raw amino-acid sequence, 509 residues long: Cytochrome P450 monooxygenase ARMGADRAFT_974139 (509 aa).

Residues 4–24 (ASLAVVVWAILLVLWLRRIFG) traverse the membrane as a helical segment. Asparagine 96 and asparagine 279 each carry an N-linked (GlcNAc...) asparagine glycan. Cysteine 439 contributes to the heme binding site.

It belongs to the cytochrome P450 family. Heme is required as a cofactor.

The protein resides in the membrane. It functions in the pathway secondary metabolite biosynthesis. Functionally, cytochrome P450 monooxygenase, part of the gene cluster that mediates the biosynthesis of melleolides, a range of antifungal and phytotoxic polyketide derivatives composed of an orsellinic acid (OA) moiety esterified to various sesquiterpene alcohols. The first step in melleolides biosynthesis is performed by the delta(6)-protoilludene synthase PRO1 which catalyzes the cyclization of farnesyl diphosphate to protoilludene. The orsellinic acid synthase armB produces OA by condensing acetyl-CoA with 3 malonyl-CoA units in a three-round chain elongation reaction folowed by a C2-C7 ring closure. ArmB further catalyzes the trans-esterification of OA to the various sesquiterpene alcohols resulting from the hydroxylation of protoilludene. The melleolides cluster also includes 5 cytochrome P450 monooxygenases, 4 NAD(+)-dependent oxidoreductases, one flavin-dependent oxidoreductase, and one O-methyltransferase. The cytochrome P450 monooxygenases may be involved in protoilludene hydroxylation to elaborate melleolides with multiple alcohol groups, such as melleolide D, which carries alcohol functionalities at C-4, C-5, C-10, and C-13. The role of the NAD(+)-dependent enzymes remains unknown. Numerous melleolides, including arnamial, show 5'-O-methylation of the aromatic moiety which may be catalyzed by the methyltransferase encoded in the cluster. The flavin-dependent oxidoreductase might represent the dehydrogenase yielding the aldehyde in position 1 of arnamial and other melleolides. Finally, several halogenase localized outside of the cluster, are able to catalyze the transfer of a single chlorine atom to the melleolide backbone, resulting in a 6'-chloromelleolide product. The polypeptide is Cytochrome P450 monooxygenase ARMGADRAFT_974139 (Armillaria gallica (Bulbous honey fungus)).